The sequence spans 1593 residues: ABC transporter C family member 8 (1593 aa).

10 helical membrane-spanning segments follow: residues 27 to 47, 75 to 95, 100 to 120, 135 to 155, 169 to 189, 280 to 300, 318 to 338, 392 to 412, 419 to 439, and 505 to 525; these read VVMTLPAIYLLIFGMKRLYYL, VIVSILLVAWKILFFIVIVSI, FEILYSVVTVVQWTVSLGLVY, LYWVFAFFVATVKLRTLTLAI, FSYFVGYCLILILSITSVLFF, FYIAALFKIIQDLLIFVGPTL, YDGLIYALLYFLAPVVQSLLL, LCPYLHMIWSAPLQLAISLVL, ASVFAGLGIMLVMIPINLAIS, and LLLWSMSPVFVSVSTFTVYIL. One can recognise an ABC transmembrane type-1 1 domain in the interval 280–561; it reads FYIAALFKII…LPSVVSSIIE (282 aa). Positions 594 to 818 constitute an ABC transporter 1 domain; that stretch reads VKIDNATLEW…GSHFTELMSH (225 aa). Residue 627-634 coordinates ATP; the sequence is GQVGSGKS. Positions 816-938 are disordered; that stretch reads MSHDEQQQQL…PLQKGEKSSV (123 aa). Positions 844–875 form a coiled coil; it reads GDNKESENNEEQNEEEEGENENLLEKVLRKSR. The segment covering 851 to 865 has biased composition (acidic residues); sequence NNEEQNEEEEGENEN. The span at 877-886 shows a compositional bias: low complexity; the sequence is RSPSPSSNRN. A compositionally biased stretch (acidic residues) spans 905-922; sequence EEDEQDERELMEDIDIDG. The next 5 helical transmembrane spans lie at 1005–1025, 1064–1084, 1157–1177, 1251–1271, and 1280–1300; these read IGVLLATCIIGFYVLTQLLSI, AKYYLSIYVAFSCGTIAATFL, IIVIAWVSPFIILAMVPVGAL, LAIRLEFLGACLVSCAVLYTV, and GTAGLVITYALAITGNMNWMV. An ABC transmembrane type-1 2 domain is found at 1010–1308; sequence ATCIIGFYVL…MVRMSCDLEN (299 aa). In terms of domain architecture, ABC transporter 2 spans 1344–1578; the sequence is IVFKNLWLTY…QDSIYYSLVK (235 aa). 1378–1385 serves as a coordination point for ATP; that stretch reads GRTGAGKS.

The protein belongs to the ABC transporter superfamily. ABCC family. Conjugate transporter (TC 3.A.1.208) subfamily.

It localises to the membrane. The chain is ABC transporter C family member 8 (abcC8) from Dictyostelium discoideum (Social amoeba).